The sequence spans 1089 residues: Pentatricopeptide repeat-containing protein MRL1, chloroplastic (1089 aa).

The N-terminal 72 residues, 1–72, are a transit peptide targeting the chloroplast; that stretch reads MEVTSTTFIS…SIRSPRLVVR (72 aa). PPR repeat units follow at residues 466-500, 501-535, 536-570, 571-605, 608-642, 643-677, 678-712, 713-747, 748-782, and 783-817; these read TMST…GMTA, DCKL…GVEA, NLHT…NVKP, DRVV…THPI, DHIS…GIRG, TPEV…DVTP, DEVF…GIRL, GTIS…KLRP, TIST…GLKP, and NTIT…GVSP.

Belongs to the PPR family. P subfamily. Expressed in stems, leaves and sepals.

Its subcellular location is the plastid. The protein resides in the chloroplast. Its function is as follows. Regulator of the large subunit (LS) of RuBisCO. Involved either in the processing or in the stabilization of the processed transcript, probably by acting as a barrier to the 5'&gt;3' degradation. In Arabidopsis thaliana (Mouse-ear cress), this protein is Pentatricopeptide repeat-containing protein MRL1, chloroplastic (MRL1).